Reading from the N-terminus, the 176-residue chain is ATP-dependent protease subunit HslV (176 aa).

Threonine 4 is a catalytic residue. 3 residues coordinate Na(+): glycine 158, cysteine 161, and threonine 164.

It belongs to the peptidase T1B family. HslV subfamily. As to quaternary structure, a double ring-shaped homohexamer of HslV is capped on each side by a ring-shaped HslU homohexamer. The assembly of the HslU/HslV complex is dependent on binding of ATP.

It is found in the cytoplasm. The catalysed reaction is ATP-dependent cleavage of peptide bonds with broad specificity.. Allosterically activated by HslU binding. In terms of biological role, protease subunit of a proteasome-like degradation complex believed to be a general protein degrading machinery. This is ATP-dependent protease subunit HslV from Rhizobium meliloti (strain 1021) (Ensifer meliloti).